Consider the following 235-residue polypeptide: Segregation and condensation protein A (235 aa).

Belongs to the ScpA family. Component of a cohesin-like complex composed of ScpA, ScpB and the Smc homodimer, in which ScpA and ScpB bind to the head domain of Smc. The presence of the three proteins is required for the association of the complex with DNA.

It localises to the cytoplasm. Its function is as follows. Participates in chromosomal partition during cell division. May act via the formation of a condensin-like complex containing Smc and ScpB that pull DNA away from mid-cell into both cell halves. In Streptococcus mutans serotype c (strain ATCC 700610 / UA159), this protein is Segregation and condensation protein A.